Reading from the N-terminus, the 146-residue chain is uncharacterized protein (146 aa).

An HTH marR-type domain is found at 1-137 (MLSQEFFNSF…TINVMNQIHE (137 aa)).

This is an uncharacterized protein from Staphylococcus aureus (strain N315).